Consider the following 83-residue polypeptide: Toxin TdNa5 (83 aa).

The signal sequence occupies residues 1-20; sequence MKTIIFFIACLMLIDVVVES. In terms of domain architecture, LCN-type CS-alpha/beta spans 21-82; it reads KDGYIIEHRG…IFDSNNNKCG (62 aa). 4 disulfides stabilise this stretch: Cys31-Cys81, Cys35-Cys57, Cys43-Cys62, and Cys47-Cys64. Position 81 is a cysteine amide (Cys81).

This sequence belongs to the long (4 C-C) scorpion toxin superfamily. Sodium channel inhibitor family. Beta subfamily. In terms of tissue distribution, expressed by the venom gland.

Its subcellular location is the secreted. In terms of biological role, inhibits the sodium currents (Nav) in an apparent irreversible manner. Produces small depolarization and induces repetitive firing in squid axons. Is specific for arthropods (crickets, triatomides, crabs and squids), but is non-toxic to mice. Shows antibacterial activity against both Gram-positive and Gram-negative bacteria. The chain is Toxin TdNa5 from Tityus discrepans (Venezuelan scorpion).